We begin with the raw amino-acid sequence, 60 residues long: MAVPARRTSKAKKNKRRTHYKVTAPTVTFDETTGDYSRSHRVSLKGYYKGRKIAKAAAAE.

This sequence belongs to the bacterial ribosomal protein bL32 family.

The chain is Large ribosomal subunit protein bL32 from Streptococcus sanguinis (strain SK36).